A 201-amino-acid chain; its full sequence is Small ribosomal subunit protein uS4c (201 aa).

The tract at residues 20–43 is disordered; sequence GLTSKRPRAGSDLRNQSRAGKKSQ. One can recognise an S4 RNA-binding domain in the interval 89–150; that stretch reads MRLDNILFRL…EQKSRVMIQN (62 aa).

The protein belongs to the universal ribosomal protein uS4 family. Part of the 30S ribosomal subunit. Contacts protein S5. The interaction surface between S4 and S5 is involved in control of translational fidelity.

The protein localises to the plastid. It localises to the chloroplast. Functionally, one of the primary rRNA binding proteins, it binds directly to 16S rRNA where it nucleates assembly of the body of the 30S subunit. Its function is as follows. With S5 and S12 plays an important role in translational accuracy. This Populus alba (White poplar) protein is Small ribosomal subunit protein uS4c (rps4).